A 555-amino-acid chain; its full sequence is Formate--tetrahydrofolate ligase (555 aa).

64-71 provides a ligand contact to ATP; that stretch reads TPAGEGKT.

It belongs to the formate--tetrahydrofolate ligase family.

It catalyses the reaction (6S)-5,6,7,8-tetrahydrofolate + formate + ATP = (6R)-10-formyltetrahydrofolate + ADP + phosphate. It participates in one-carbon metabolism; tetrahydrofolate interconversion. The chain is Formate--tetrahydrofolate ligase from Allorhizobium ampelinum (strain ATCC BAA-846 / DSM 112012 / S4) (Agrobacterium vitis (strain S4)).